A 149-amino-acid polypeptide reads, in one-letter code: D-aminoacyl-tRNA deacylase (149 aa).

The Gly-cisPro motif, important for rejection of L-amino acids signature appears at 137–138 (GP).

It belongs to the DTD family. Homodimer.

It is found in the cytoplasm. It catalyses the reaction glycyl-tRNA(Ala) + H2O = tRNA(Ala) + glycine + H(+). It carries out the reaction a D-aminoacyl-tRNA + H2O = a tRNA + a D-alpha-amino acid + H(+). Functionally, an aminoacyl-tRNA editing enzyme that deacylates mischarged D-aminoacyl-tRNAs. Also deacylates mischarged glycyl-tRNA(Ala), protecting cells against glycine mischarging by AlaRS. Acts via tRNA-based rather than protein-based catalysis; rejects L-amino acids rather than detecting D-amino acids in the active site. By recycling D-aminoacyl-tRNA to D-amino acids and free tRNA molecules, this enzyme counteracts the toxicity associated with the formation of D-aminoacyl-tRNA entities in vivo and helps enforce protein L-homochirality. This chain is D-aminoacyl-tRNA deacylase, found in Thermoanaerobacter pseudethanolicus (strain ATCC 33223 / 39E) (Clostridium thermohydrosulfuricum).